The chain runs to 434 residues: UDP-N-acetylglucosamine 1-carboxyvinyltransferase (434 aa).

34 to 35 (KN) is a binding site for phosphoenolpyruvate. UDP-N-acetyl-alpha-D-glucosamine is bound at residue Arg-104. Cys-128 (proton donor) is an active-site residue. Cys-128 bears the 2-(S-cysteinyl)pyruvic acid O-phosphothioketal mark. Residues Asp-319 and Ile-341 each coordinate UDP-N-acetyl-alpha-D-glucosamine.

Belongs to the EPSP synthase family. MurA subfamily.

Its subcellular location is the cytoplasm. It catalyses the reaction phosphoenolpyruvate + UDP-N-acetyl-alpha-D-glucosamine = UDP-N-acetyl-3-O-(1-carboxyvinyl)-alpha-D-glucosamine + phosphate. The protein operates within cell wall biogenesis; peptidoglycan biosynthesis. Its function is as follows. Cell wall formation. Adds enolpyruvyl to UDP-N-acetylglucosamine. The chain is UDP-N-acetylglucosamine 1-carboxyvinyltransferase from Prochlorococcus marinus (strain MIT 9313).